Here is a 337-residue protein sequence, read N- to C-terminus: Phosphate acyltransferase (337 aa).

The protein belongs to the PlsX family. Homodimer. Probably interacts with PlsY.

It is found in the cytoplasm. The enzyme catalyses a fatty acyl-[ACP] + phosphate = an acyl phosphate + holo-[ACP]. It participates in lipid metabolism; phospholipid metabolism. Its function is as follows. Catalyzes the reversible formation of acyl-phosphate (acyl-PO(4)) from acyl-[acyl-carrier-protein] (acyl-ACP). This enzyme utilizes acyl-ACP as fatty acyl donor, but not acyl-CoA. This Acidobacterium capsulatum (strain ATCC 51196 / DSM 11244 / BCRC 80197 / JCM 7670 / NBRC 15755 / NCIMB 13165 / 161) protein is Phosphate acyltransferase.